The primary structure comprises 439 residues: MNLTPKEIVKFLDDYVIGQKKAKKIIAIALRNRYRRMQLSPELQDDIVPKNILMIGSTGVGKTEIARRLAKMMGFPFIKIEASKYTEVGFVGRDVESMVRDLANAALNLVKNEQREKNKDKIDEFIENKILEKLLPPLPKGISDEKQEEYKNSLEKMRTKLRNGDLDESTIEIEISQNMFDTNPNLPPEMGAMQDIVKVIGVGSKKVKKEMKIKDAKNALKNEAGEKILDQESIKSEALKRAENEGIIFIDEIDKIAVSSGNSNRQDPSKEGVQRDLLPIVEGSNIQTKIGTLKTDHILFIAAGAFHLSKPSDLIPELQGRFPLRVELDSLDDKALYEILTRPKNSLLKQYSQLLKTENLELEFDDEAIKEIAKIASRANEEMQDIGARRLHTVIEKLLEDLSFEADEYAGKKFVVDKKMVEEKLGDIIENKDLARYIL.

ATP is bound by residues Ile17, 59 to 64 (GVGKTE), Asp251, Glu317, and Arg389.

The protein belongs to the ClpX chaperone family. HslU subfamily. A double ring-shaped homohexamer of HslV is capped on each side by a ring-shaped HslU homohexamer. The assembly of the HslU/HslV complex is dependent on binding of ATP.

It localises to the cytoplasm. Its function is as follows. ATPase subunit of a proteasome-like degradation complex; this subunit has chaperone activity. The binding of ATP and its subsequent hydrolysis by HslU are essential for unfolding of protein substrates subsequently hydrolyzed by HslV. HslU recognizes the N-terminal part of its protein substrates and unfolds these before they are guided to HslV for hydrolysis. This Campylobacter jejuni subsp. jejuni serotype O:6 (strain 81116 / NCTC 11828) protein is ATP-dependent protease ATPase subunit HslU.